A 421-amino-acid chain; its full sequence is UPF0415 protein C7orf25 homolog (421 aa).

The protein belongs to the UPF0415 family.

This chain is UPF0415 protein C7orf25 homolog, found in Bos taurus (Bovine).